The primary structure comprises 203 residues: SOSS complex subunit B1 (203 aa).

The segment at residues 22–92 (IVLETGRVTK…TLYTGRGGDL (71 aa)) is a DNA-binding region (OB). The interval 111–203 (PNPEYIAQQS…GKEPRRTGKR (93 aa)) is disordered. Polar residues predominate over residues 117–128 (AQQSQNKQAQAE). Residues 129–140 (SGTGTNSHNSSS) show a composition bias toward low complexity. Residues 149-182 (ENGNGSNSSGPPTHQSTAPTHSTSGRITRSQPNH) show a composition bias toward polar residues.

It belongs to the SOSS-B family. SOSS-B1 subfamily. In terms of assembly, component of the SOSS complex, composed of soss-b (soss-b1/nabp2 or soss-b2/nabp1), soss-a/ints3 and soss-c/inip. SOSS complexes containing soss-b1/nabp2 are more abundant than complexes containing soss-b2/nabp1.

It is found in the nucleus. Its function is as follows. Component of the SOSS complex, a multiprotein complex that functions downstream of the MRN complex to promote DNA repair and G2/M checkpoint. In the SOSS complex, acts as a sensor of single-stranded DNA that binds to single-stranded DNA. The SOSS complex associates with DNA lesions and influences diverse endpoints in the cellular DNA damage response including cell-cycle checkpoint activation, recombinational repair and maintenance of genomic stability. Required for efficient homologous recombination-dependent repair of double-strand breaks (DSBs). This Xenopus tropicalis (Western clawed frog) protein is SOSS complex subunit B1 (nabp2).